A 66-amino-acid chain; its full sequence is Large ribosomal subunit protein bL33c (66 aa).

In terms of assembly, component of the chloroplast large ribosomal subunit (LSU). Mature 70S chloroplast ribosomes of higher plants consist of a small (30S) and a large (50S) subunit. The 30S small subunit contains 1 molecule of ribosomal RNA (16S rRNA) and 24 different proteins. The 50S large subunit contains 3 rRNA molecules (23S, 5S and 4.5S rRNA) and 33 different proteins.

It is found in the plastid. The protein localises to the chloroplast. Functionally, component of the chloroplast ribosome (chloro-ribosome), a dedicated translation machinery responsible for the synthesis of chloroplast genome-encoded proteins, including proteins of the transcription and translation machinery and components of the photosynthetic apparatus. This is Large ribosomal subunit protein bL33c (rpl33) from Spinacia oleracea (Spinach).